Consider the following 382-residue polypeptide: Galactokinase (382 aa).

34 to 37 contacts substrate; sequence EHTD. Residue 124–130 participates in ATP binding; it reads GAGLSSS. Residues S130 and E162 each contribute to the Mg(2+) site. D174 serves as the catalytic Proton acceptor. Y223 provides a ligand contact to substrate.

The protein belongs to the GHMP kinase family. GalK subfamily.

The protein localises to the cytoplasm. It catalyses the reaction alpha-D-galactose + ATP = alpha-D-galactose 1-phosphate + ADP + H(+). Its pathway is carbohydrate metabolism; galactose metabolism. Functionally, catalyzes the transfer of the gamma-phosphate of ATP to D-galactose to form alpha-D-galactose-1-phosphate (Gal-1-P). The chain is Galactokinase from Salmonella arizonae (strain ATCC BAA-731 / CDC346-86 / RSK2980).